A 407-amino-acid polypeptide reads, in one-letter code: Magnesium-protoporphyrin IX monomethyl ester [oxidative] cyclase 1, chloroplastic (407 aa).

Polar residues predominate over residues 1–10 (MQTTLKQQRA). The interval 1-28 (MQTTLKQQRASGRVSARQPFRSAAVARP) is disordered.

It belongs to the AcsF family. It depends on Fe cation as a cofactor.

The protein resides in the plastid. Its subcellular location is the chloroplast thylakoid membrane. It carries out the reaction Mg-protoporphyrin IX 13-monomethyl ester + 3 NADPH + 3 O2 + 2 H(+) = 3,8-divinyl protochlorophyllide a + 3 NADP(+) + 5 H2O. The protein operates within porphyrin-containing compound metabolism; chlorophyll biosynthesis. Catalyzes the formation of the isocyclic ring in chlorophyll biosynthesis under oxygen- and copper-deficient conditions. Mediates the cyclase reaction, which results in the formation of divinylprotochlorophyllide (Pchlide) characteristic of all chlorophylls from magnesium-protoporphyrin IX 13-monomethyl ester (MgPMME). The chain is Magnesium-protoporphyrin IX monomethyl ester [oxidative] cyclase 1, chloroplastic (CRD1) from Chlamydomonas reinhardtii (Chlamydomonas smithii).